We begin with the raw amino-acid sequence, 381 residues long: Fatty acid elongase 6 (381 aa).

The next 7 membrane-spanning stretches (helical) occupy residues 10–30, 69–89, 107–127, 153–173, 182–202, 216–236, and 280–300; these read IAAA…LVYS, LPYL…SLIV, GLVH…GLMI, LIWL…IMLL, FLHV…LLVA, GVHV…SGIV, and LLQI…NFLV. Residues 184 to 188 carry the HxxHH motif motif; it reads HVYHH. His-187 functions as the Nucleophile in the catalytic mechanism. The interval 362–381 is disordered; it reads RKNGNGNGQKASLQAMAGSR.

It belongs to the ELO family.

The protein resides in the membrane. It participates in lipid metabolism; polyunsaturated fatty acid biosynthesis. Involved in the synthesis of fatty acids. Elongates C18 polyunsaturated fatty acids (PUFAs) with a preference for Delta6 PUFAs. This is Fatty acid elongase 6 from Leishmania major.